The following is a 219-amino-acid chain: Probable GTP-binding protein EngB (219 aa).

In terms of domain architecture, EngB-type G spans 26 to 200; that stretch reads EGVEIAFAGR…RAKLDTWFAP (175 aa). Residues 34–41, 61–65, 79–82, 146–149, and 179–181 contribute to the GTP site; these read GRSNAGKS, GRTQL, DLPG, TKAD, and FSS. Positions 41 and 63 each coordinate Mg(2+).

Belongs to the TRAFAC class TrmE-Era-EngA-EngB-Septin-like GTPase superfamily. EngB GTPase family. Requires Mg(2+) as cofactor.

Functionally, necessary for normal cell division and for the maintenance of normal septation. The sequence is that of Probable GTP-binding protein EngB from Vibrio parahaemolyticus serotype O3:K6 (strain RIMD 2210633).